Consider the following 93-residue polypeptide: NADH-dependent phenylglyoxylate dehydrogenase subunit delta (93 aa).

4Fe-4S ferredoxin-type domains lie at Met-39–Ala-68 and His-66–Arg-93.

In terms of assembly, dimer of heteropentamers composed of an alpha (PadG), a beta (PadI), a gamma (PadE), a delta (PadF) and an epsilon (PadH) subunit. Requires [4Fe-4S] cluster as cofactor.

It catalyses the reaction phenylglyoxylate + NAD(+) + CoA = benzoyl-CoA + CO2 + NADH. With respect to regulation, activated by magnesium ions and thiamine diphosphate. Functionally, involved in the anaerobic metabolism of phenylalanine and phenylacetate. Catalyzes the oxidative decarboxylation of phenylglyoxylate to benzoyl-CoA and CO(2). It can also react slowly with 2-oxo-3-methylbutanoate and use different electron acceptors such as benzyl viologen, methyl viologen, FAD or FMN, but NAD seems to be the physiological electron acceptor. Also catalyzes an isotope exchange between CO(2) and the carboxyl group which proves partial or complete reversibility of the oxidative decarboxylation reaction. This is NADH-dependent phenylglyoxylate dehydrogenase subunit delta (padF) from Aromatoleum evansii (Azoarcus evansii).